A 300-amino-acid polypeptide reads, in one-letter code: tRNA dimethylallyltransferase 1 (300 aa).

13–20 lines the ATP pocket; it reads GPTGVGKT. Residue 15–20 coordinates substrate; that stretch reads TGVGKT. Residues 38–41 form an interaction with substrate tRNA region; that stretch reads DSRQ.

The protein belongs to the IPP transferase family. Monomer. Mg(2+) is required as a cofactor.

It catalyses the reaction adenosine(37) in tRNA + dimethylallyl diphosphate = N(6)-dimethylallyladenosine(37) in tRNA + diphosphate. In terms of biological role, catalyzes the transfer of a dimethylallyl group onto the adenine at position 37 in tRNAs that read codons beginning with uridine, leading to the formation of N6-(dimethylallyl)adenosine (i(6)A). This chain is tRNA dimethylallyltransferase 1, found in Porphyromonas gingivalis (strain ATCC BAA-308 / W83).